We begin with the raw amino-acid sequence, 196 residues long: uncharacterized protein (196 aa).

FAD is bound by residues 15–22 (SQGKFNKT), 68–71 (GWWM), Y107, and 123–126 (TWNA).

This sequence belongs to the oxidoreductase MdaB family. FAD serves as cofactor.

This is an uncharacterized protein from Schizosaccharomyces pombe (strain 972 / ATCC 24843) (Fission yeast).